The sequence spans 287 residues: Small ribosomal subunit biogenesis GTPase RsgA (287 aa).

One can recognise a CP-type G domain in the interval 61-218; the sequence is SSELIRPTVA…LVDTPGFTTL (158 aa). GTP is bound by residues 110–113 and 161–169; these read NKED and GPSGAGKST. Zn(2+) is bound by residues C242, C247, H249, and C255.

Belongs to the TRAFAC class YlqF/YawG GTPase family. RsgA subfamily. Monomer. Associates with 30S ribosomal subunit, binds 16S rRNA. The cofactor is Zn(2+).

The protein resides in the cytoplasm. Functionally, one of several proteins that assist in the late maturation steps of the functional core of the 30S ribosomal subunit. Helps release RbfA from mature subunits. May play a role in the assembly of ribosomal proteins into the subunit. Circularly permuted GTPase that catalyzes slow GTP hydrolysis, GTPase activity is stimulated by the 30S ribosomal subunit. The polypeptide is Small ribosomal subunit biogenesis GTPase RsgA (Clostridium perfringens (strain SM101 / Type A)).